A 658-amino-acid chain; its full sequence is Transcription factor cep-1 (658 aa).

Residues 238–428 mediate DNA binding; that stretch reads EEWLTFEVKK…RDWKNFCEKR (191 aa). Zn(2+) is bound by residues Cys-319, His-322, Cys-375, and Cys-379. Positions 450-477 are disordered; it reads QSSLHSGPSSPEKVTDTSQMFQSTSSSS. A compositionally biased stretch (low complexity) spans 466 to 476; sequence TSQMFQSTSSS. Residues 535–564 form a required for tertiary structure stability of the protein region; that stretch reads QYGLQRQVKLSEKEYSKFVAFFAKEGENEI.

The protein belongs to the p53 family. As to quaternary structure, homodimer. Interacts (via C-terminus domain) with prmt-5; not methylated by prmt-5. Interacts with cbp-1 (via HAT domain); cep-1 transcriptional activity may be inhibited by interaction with methylated cbp-1. Component of a complex that contains prmt-5 and cbp-1. Interacts with ape-1; the interaction inhibits pro-apoptotic activity of cep-1. Zn(2+) is required as a cofactor. Post-translationally, phosphorylated in response to IR-induced DNA damage which is thought to be mediated by akt-1.

It is found in the nucleus. In terms of biological role, transcriptional activator that binds the same DNA consensus sequence as p53. Has a role in normal development to ensure proper meiotic chromosome segregation. Promotes apoptosis under conditions of cellular and genotoxic stress in response to DNA damage, hypoxia, or starvation. However, not required for DNA repair in response to UV-C or to regulate cell-cycle progression. Regulates germline apoptosis in response to DNA damage. Required for induction of ced-13 in response to DNA damage. Its pro-apoptotic activity is inhibited when bound to ape-1 in vitro. Regulates germline proliferation by activating phg-1. Regulates DNA damage-induced apoptosis by inducing transcription of the programmed cell death activator egl-1. Negatively regulates lifespan. In Caenorhabditis briggsae, this protein is Transcription factor cep-1.